Here is a 629-residue protein sequence, read N- to C-terminus: FAST kinase domain-containing protein 4 (629 aa).

Residues 559–617 (IAFLRWEFPNFNSRSKDLLGRFVLARRHVLAAGFLVVDVPYYEWLDLKSEWQKTAYLKD) enclose the RAP domain.

Belongs to the FAST kinase family.

It localises to the mitochondrion matrix. Plays a role in processing of mitochondrial RNA precursors and in stabilization of a subset of mature mitochondrial RNA species, such as MT-CO1, MT-CO2, MT-CYB, MT-CO3, MT-ND3, MT-ND5 and MT-ATP8/6. May play a role in cell cycle progression. The chain is FAST kinase domain-containing protein 4 (Tbrg4) from Rattus norvegicus (Rat).